The following is a 284-amino-acid chain: 4-diphosphocytidyl-2-C-methyl-D-erythritol kinase (284 aa).

Residue K14 is part of the active site. 98-108 is an ATP binding site; that stretch reads PMGGGLGGGSS. Residue D140 is part of the active site.

This sequence belongs to the GHMP kinase family. IspE subfamily.

The catalysed reaction is 4-CDP-2-C-methyl-D-erythritol + ATP = 4-CDP-2-C-methyl-D-erythritol 2-phosphate + ADP + H(+). It participates in isoprenoid biosynthesis; isopentenyl diphosphate biosynthesis via DXP pathway; isopentenyl diphosphate from 1-deoxy-D-xylulose 5-phosphate: step 3/6. In terms of biological role, catalyzes the phosphorylation of the position 2 hydroxy group of 4-diphosphocytidyl-2C-methyl-D-erythritol. This chain is 4-diphosphocytidyl-2-C-methyl-D-erythritol kinase, found in Shewanella denitrificans (strain OS217 / ATCC BAA-1090 / DSM 15013).